Here is a 315-residue protein sequence, read N- to C-terminus: Olfactory receptor 2T5 (315 aa).

Over 1 to 29 (MANITRMANHTGKLDFILMGLFRRSKHPA) the chain is Extracellular. 2 N-linked (GlcNAc...) asparagine glycosylation sites follow: Asn3 and Asn9. Residues 30–53 (LLSVVIFVVFLKALSGNAVLILLI) form a helical membrane-spanning segment. Topologically, residues 54–61 (HCDAHLHS) are cytoplasmic. The helical transmembrane segment at 62–83 (PMYFFISQLSLMDMAYISVTVP) threads the bilayer. The Extracellular portion of the chain corresponds to 84 to 104 (KMLLDQVMGVNKVSAPECGMQ). The cysteines at positions 101 and 193 are disulfide-linked. A helical membrane pass occupies residues 105–124 (MFLYLTLAGSEFFLLATMAY). The Cytoplasmic portion of the chain corresponds to 125 to 143 (DRYVAICHPLRYPVLMNHR). The helical transmembrane segment at 144–162 (VCLFLASGCWFLGSVDGFM) threads the bilayer. At 163–199 (LTPITMSFPFCRSWEIHHFFCEVPAVTILSCSDTSLY) the chain is on the extracellular side. A helical transmembrane segment spans residues 200–223 (ETLMYLCCVLMLLIPVTIISSSYL). The Cytoplasmic segment spans residues 224 to 240 (LILLTVHRMNSAEGRKK). Residues 241 to 263 (AFATCSSHLTVVILFYGAAVYTY) form a helical membrane-spanning segment. The Extracellular portion of the chain corresponds to 264–276 (MLPSSYHTPEKDM). The chain crosses the membrane as a helical span at residues 277–296 (MVSVFYTILTPVLNPLIYSL). The Cytoplasmic portion of the chain corresponds to 297–315 (RNKDVMGALKKMLTVRFVL).

Belongs to the G-protein coupled receptor 1 family.

The protein resides in the cell membrane. Functionally, odorant receptor. The polypeptide is Olfactory receptor 2T5 (OR2T5) (Homo sapiens (Human)).